Consider the following 512-residue polypeptide: Vacuolar protein sorting-associated protein 30 (512 aa).

Positions 294–511 (TNIYNESFRI…LVFCSSKLSL (218 aa)) are BARA.

Belongs to the beclin family. Component of the autophagy-specific VPS34 PI3-kinase complex I composed of VPS15, VPS30, VPS34, ATG14 and ATG38; and of the VPS34 PI3-kinase complex II composed of VPS15, VPS30, VPS34 and VPS38.

It localises to the endosome membrane. The protein localises to the vacuole membrane. The protein resides in the preautophagosomal structure membrane. Functionally, required for cytoplasm to vacuole transport (Cvt), autophagy, nucleophagy, and mitophagy, as a part of the autophagy-specific VPS34 PI3-kinase complex I. This complex is essential to recruit the ATG8-phosphatidylinositol conjugate and the ATG12-ATG5 conjugate to the pre-autophagosomal structure. Also involved in endosome-to-Golgi retrograde transport as part of the VPS34 PI3-kinase complex II. This second complex is required for the endosome-to-Golgi retrieval of PEP1 and KEX2, and the recruitment of VPS5 and VPS7, two components of the retromer complex, to endosomal membranes (probably through the synthesis of a specific pool of phosphatidylinositol 3-phosphate recruiting the retromer to the endosomes). Required for survival and/or proliferation in kidneys but not brain. This chain is Vacuolar protein sorting-associated protein 30, found in Candida glabrata (strain ATCC 2001 / BCRC 20586 / JCM 3761 / NBRC 0622 / NRRL Y-65 / CBS 138) (Yeast).